We begin with the raw amino-acid sequence, 249 residues long: Derlin-2 (249 aa).

The Cytoplasmic segment spans residues 1-21 (MAQAVEEWYRQMPIITRSYLT). The chain crosses the membrane as a helical span at residues 22–42 (AAVVTTVGCTLEIISPYHLYL). At 43–96 (NPKLVVQHYEIWRLVTNFLYFRKMDLDFLFHMFFLARYCKLLEENSFRGRTADF) the chain is on the lumenal side. A helical transmembrane segment spans residues 97–117 (FYMLLFGATVLTGIVLIGGMI). Residues 118-122 (PYISE) are Cytoplasmic-facing. Residues 123 to 143 (TFARILFLSNSLTFMMVYVWS) form a helical membrane-spanning segment. The Lumenal segment spans residues 144–152 (KHNPFIHMS). The helical transmembrane segment at 153 to 173 (FLGLFTFTAAYLPWVLLGFSI) threads the bilayer. At 174–249 (LVGSSTWVDL…GAMGADPQAQ (76 aa)) the chain is on the cytoplasmic side.

It belongs to the derlin family.

The protein localises to the endoplasmic reticulum membrane. In terms of biological role, may be involved in the degradation process of specific misfolded endoplasmic reticulum (ER) luminal proteins. The polypeptide is Derlin-2 (DER2) (Oryza sativa subsp. japonica (Rice)).